Here is a 62-residue protein sequence, read N- to C-terminus: Large ribosomal subunit protein bL28 (62 aa).

Residues 1–27 (MAKECVITGRKSRSGNKRSHAMNSSKR) form a disordered region. Residues 10 to 20 (RKSRSGNKRSH) show a composition bias toward basic residues.

The protein belongs to the bacterial ribosomal protein bL28 family.

In Listeria innocua serovar 6a (strain ATCC BAA-680 / CLIP 11262), this protein is Large ribosomal subunit protein bL28.